Consider the following 273-residue polypeptide: Phosphate import ATP-binding protein PstB (273 aa).

The 240-residue stretch at 18 to 257 (ISLQNVTISY…EFDKTKKIFN (240 aa)) folds into the ABC transporter domain. ATP is bound at residue 50–57 (GPSGCGKS).

The protein belongs to the ABC transporter superfamily. Phosphate importer (TC 3.A.1.7) family. As to quaternary structure, the complex is composed of two ATP-binding proteins (PstB), two transmembrane proteins (PstC and PstA) and a solute-binding protein (PstS).

The protein resides in the cell inner membrane. The enzyme catalyses phosphate(out) + ATP + H2O = ADP + 2 phosphate(in) + H(+). Its function is as follows. Part of the ABC transporter complex PstSACB involved in phosphate import. Responsible for energy coupling to the transport system. The polypeptide is Phosphate import ATP-binding protein PstB (Prochlorococcus marinus (strain SARG / CCMP1375 / SS120)).